Here is a 532-residue protein sequence, read N- to C-terminus: uncharacterized protein (532 aa).

Transmembrane regions (helical) follow at residues 25 to 45 (ITKILSAVYRVPFQNIVGDVG), 65 to 85 (SGFPVIISKLMNDYSEKNHHT), 109 to 129 (AVPIALFMGDSHLAVLIQVAA), 134 to 154 (LFPFVALLRGGFQGRHEMLPS), 179 to 199 (KGASLYTAGAAAASGSLAGSL), 203 to 223 (IILGFFWFKTKRDNQTDRQNE), 248 to 268 (LLLFIQLVDALNLYALLSGGE), 302 to 322 (VPYISMAVKNKELKIMKEKIT), 344 to 364 (KPVNIMLFQNGEGTGALQVFS), 371 to 391 (SLAVTAAAVLQGAGYTVFPAI), 392 to 412 (AVGAGVAVKWVLNTLLVPRYG), 425 to 445 (AAVAGLNLYQLRQKEWLDKLR), 459 to 479 (SAVLLAYTRLWTFLFPATGRG), and 494 to 514 (AVFIYCMMRLGIFTDEELNSV).

Belongs to the polysaccharide synthase family.

It localises to the cell membrane. This is an uncharacterized protein from Bacillus subtilis (strain 168).